The sequence spans 267 residues: Diphthine--ammonia ligase (267 aa).

At Y97 the chain carries Phosphotyrosine.

This sequence belongs to the Diphthine--ammonia ligase family.

The catalysed reaction is diphthine-[translation elongation factor 2] + NH4(+) + ATP = diphthamide-[translation elongation factor 2] + AMP + diphosphate + H(+). The protein operates within protein modification; peptidyl-diphthamide biosynthesis. Its function is as follows. Amidase that catalyzes the last step of diphthamide biosynthesis using ammonium and ATP. Diphthamide biosynthesis consists in the conversion of an L-histidine residue in the translation elongation factor eEF-2 (EEF2) to diphthamide. This is Diphthine--ammonia ligase (Dph6) from Rattus norvegicus (Rat).